The sequence spans 371 residues: Hsc70-interacting protein (371 aa).

The disordered stretch occupies residues 38 to 80 (MGGKVPPATHKAKSEENTKEEKRDKTTEENIKTEELSSEESDL). The span at 49–72 (AKSEENTKEEKRDKTTEENIKTEE) shows a compositional bias: basic and acidic residues. TPR repeat units lie at residues 113 to 146 (ANEK…NPRL), 147 to 180 (AILY…NPDS), and 181 to 214 (AQPY…DYDE). A compositionally biased stretch (basic and acidic residues) spans 255 to 271 (KAREEHERAQREEEARR). A disordered region spans residues 255 to 296 (KAREEHERAQREEEARRQSGSQYGSFPGGFPGGMPGNFPGGM). Residues 280–296 (FPGGFPGGMPGNFPGGM) are compositionally biased toward gly residues. The region spanning 321–360 (DPEVLAAMQDPEVMVAFQDVAQNPSNMSKYQSNPKVMNLI) is the STI1 domain. S348 carries the phosphoserine; by GRK5 modification. 2 positions are modified to N6-acetyllysine: K355 and K362.

It belongs to the FAM10 family. Homotetramer. Interacts with HSC70 as well as DNAJ homologs and HSP90. Interacts (via the C-terminus 302- 318 AA) with GRK5.

The protein localises to the cytoplasm. Its function is as follows. One HIP oligomer binds the ATPase domains of at least two HSC70 molecules dependent on activation of the HSC70 ATPase by HSP40. Stabilizes the ADP state of HSC70 that has a high affinity for substrate protein. Through its own chaperone activity, it may contribute to the interaction of HSC70 with various target proteins. The protein is Hsc70-interacting protein (St13) of Mus musculus (Mouse).